A 189-amino-acid chain; its full sequence is Interferon alpha-1 (189 aa).

Positions 1-23 are cleaved as a signal peptide; that stretch reads MAPTSAFLTALVLLSCNAICSLG. Intrachain disulfides connect cysteine 24-cysteine 122 and cysteine 52-cysteine 162.

This sequence belongs to the alpha/beta interferon family. In terms of assembly, interacts with CR2.

It localises to the secreted. Its function is as follows. Produced by macrophages, IFN-alpha have antiviral activities. Interferon stimulates the production of two enzymes: a protein kinase and an oligoadenylate synthetase. The sequence is that of Interferon alpha-1 from Sus scrofa (Pig).